The primary structure comprises 179 residues: Inner membrane-spanning protein YciB (179 aa).

A run of 5 helical transmembrane segments spans residues 22-42 (IYAA…YSWV), 50-70 (MALI…FFHN), 76-96 (WKVT…QWVM), 121-141 (LAWA…AFWL), and 149-169 (FKVF…GVYI).

The protein belongs to the YciB family.

The protein localises to the cell inner membrane. Plays a role in cell envelope biogenesis, maintenance of cell envelope integrity and membrane homeostasis. In Citrobacter koseri (strain ATCC BAA-895 / CDC 4225-83 / SGSC4696), this protein is Inner membrane-spanning protein YciB.